The sequence spans 217 residues: Transmembrane emp24 domain-containing protein p24delta6 (217 aa).

The N-terminal stretch at 1-26 (MAISPVLFIGLIYLAGGGSLFPGVEA) is a signal peptide. Over 27-186 (IWLTVPESGE…INEKTNTRVN (160 aa)) the chain is Lumenal. One can recognise a GOLD domain in the interval 36–152 (ERCVYEEIQA…IEGVELEIRR (117 aa)). 2 N-linked (GlcNAc...) asparagine glycosylation sites follow: Asn-84 and Asn-116. The stretch at 138 to 160 (AKKEKIEGVELEIRRSTEYASAI) forms a coiled coil. 2 positions are modified to omega-N-methylated arginine: Arg-170 and Arg-175. A helical transmembrane segment spans residues 187–207 (QLGLMSLGVAIVVSISQVLYL). Residues 208–217 (KRYFLKKKLI) are Cytoplasmic-facing. The COPII vesicle coat-binding motif lies at 210 to 211 (YF). Positions 210-217 (YFLKKKLI) match the COPI vesicle coat-binding motif.

This sequence belongs to the EMP24/GP25L family. As to quaternary structure, probably oligomerizes with other members of the EMP24/GP25L family. Associates with the COPI vesicle coat (coatomer). Associates with the COPII vesicle coat (coatomer).

Its subcellular location is the endoplasmic reticulum membrane. Functionally, involved in vesicular protein trafficking. Mainly functions in the early secretory pathway. Thought to act as cargo receptor at the lumenal side for incorporation of secretory cargo molecules into transport vesicles and to be involved in vesicle coat formation at the cytoplasmic side. The sequence is that of Transmembrane emp24 domain-containing protein p24delta6 from Arabidopsis thaliana (Mouse-ear cress).